Here is a 357-residue protein sequence, read N- to C-terminus: tRNA N6-adenosine threonylcarbamoyltransferase (357 aa).

His-116 and His-120 together coordinate Fe cation. Substrate is bound by residues 139-143, Asp-172, Gly-185, and Asn-284; that span reads LVSGG. Fe cation is bound at residue Asp-312.

It belongs to the KAE1 / TsaD family. Fe(2+) serves as cofactor.

It localises to the cytoplasm. It carries out the reaction L-threonylcarbamoyladenylate + adenosine(37) in tRNA = N(6)-L-threonylcarbamoyladenosine(37) in tRNA + AMP + H(+). Required for the formation of a threonylcarbamoyl group on adenosine at position 37 (t(6)A37) in tRNAs that read codons beginning with adenine. Is involved in the transfer of the threonylcarbamoyl moiety of threonylcarbamoyl-AMP (TC-AMP) to the N6 group of A37, together with TsaE and TsaB. TsaD likely plays a direct catalytic role in this reaction. This is tRNA N6-adenosine threonylcarbamoyltransferase from Synechococcus sp. (strain CC9605).